The following is a 512-amino-acid chain: Zinc finger CCCH-type with G patch domain-containing protein (512 aa).

The C3H1-type zinc-finger motif lies at 159 to 186; sequence QEMVPCAYFLEGDCKFNDEMCRFSHGEL. The tract at residues 255 to 280 is disordered; sequence LEGDDVPSSDSESNSDSDEENEDDVV. The segment covering 256 to 279 has biased composition (acidic residues); it reads EGDDVPSSDSESNSDSDEENEDDV. The G-patch domain occupies 308–354; that stretch reads TKGIGSKIMLKMGYVVGAGLGSKGEGIVVPVSAQVLPQGRSLDYCMQ. The span at 407–417 shows a compositional bias: low complexity; it reads SSNGSSSSSGS. Positions 407–432 are disordered; the sequence is SSNGSSSSSGSKKPAAKDNQMDLPSC.

The protein localises to the nucleus. Its function is as follows. Transcription repressor. The sequence is that of Zinc finger CCCH-type with G patch domain-containing protein from Aedes aegypti (Yellowfever mosquito).